Consider the following 273-residue polypeptide: Putative pyruvate, phosphate dikinase regulatory protein (273 aa).

ADP is bound at residue 149–156; it reads GPSRTSKT.

Belongs to the pyruvate, phosphate/water dikinase regulatory protein family. PDRP subfamily.

It carries out the reaction N(tele)-phospho-L-histidyl/L-threonyl-[pyruvate, phosphate dikinase] + ADP = N(tele)-phospho-L-histidyl/O-phospho-L-threonyl-[pyruvate, phosphate dikinase] + AMP + H(+). The enzyme catalyses N(tele)-phospho-L-histidyl/O-phospho-L-threonyl-[pyruvate, phosphate dikinase] + phosphate + H(+) = N(tele)-phospho-L-histidyl/L-threonyl-[pyruvate, phosphate dikinase] + diphosphate. In terms of biological role, bifunctional serine/threonine kinase and phosphorylase involved in the regulation of the pyruvate, phosphate dikinase (PPDK) by catalyzing its phosphorylation/dephosphorylation. The protein is Putative pyruvate, phosphate dikinase regulatory protein of Rickettsia canadensis (strain McKiel).